The primary structure comprises 481 residues: Molybdate-anion transporter (481 aa).

12 consecutive transmembrane segments (helical) span residues 1–21, 47–67, 80–100, 131–151, 180–200, 201–221, 276–296, 306–326, 341–361, 371–391, 403–423, and 443–463; these read MFVT…ALEI, LFLK…PYLY, IAIL…VAGW, FMLI…TTTF, WNYG…EWLG, LGPV…AWFV, VMLL…FVFL, PPLG…STLF, LLCL…FSTV, LLAF…VSFL, AVLA…LLAL, and FAGC…LFTV.

Belongs to the major facilitator superfamily.

The protein resides in the cell membrane. Its function is as follows. Mediates high-affinity intracellular uptake of the rare oligo-element molybdenum. The chain is Molybdate-anion transporter (mfsd5) from Danio rerio (Zebrafish).